Here is a 119-residue protein sequence, read N- to C-terminus: Large ribosomal subunit protein uL22 (119 aa).

Belongs to the universal ribosomal protein uL22 family. Part of the 50S ribosomal subunit.

Its function is as follows. This protein binds specifically to 23S rRNA; its binding is stimulated by other ribosomal proteins, e.g. L4, L17, and L20. It is important during the early stages of 50S assembly. It makes multiple contacts with different domains of the 23S rRNA in the assembled 50S subunit and ribosome. In terms of biological role, the globular domain of the protein is located near the polypeptide exit tunnel on the outside of the subunit, while an extended beta-hairpin is found that lines the wall of the exit tunnel in the center of the 70S ribosome. This Chlorobium chlorochromatii (strain CaD3) protein is Large ribosomal subunit protein uL22.